The following is a 937-amino-acid chain: Alanine--tRNA ligase (937 aa).

Positions 626, 630, 727, and 731 each coordinate Zn(2+).

It belongs to the class-II aminoacyl-tRNA synthetase family. The cofactor is Zn(2+).

The protein localises to the cytoplasm. The enzyme catalyses tRNA(Ala) + L-alanine + ATP = L-alanyl-tRNA(Ala) + AMP + diphosphate. In terms of biological role, catalyzes the attachment of alanine to tRNA(Ala) in a two-step reaction: alanine is first activated by ATP to form Ala-AMP and then transferred to the acceptor end of tRNA(Ala). Also edits incorrectly charged Ser-tRNA(Ala) and Gly-tRNA(Ala) via its editing domain. The sequence is that of Alanine--tRNA ligase from Opitutus terrae (strain DSM 11246 / JCM 15787 / PB90-1).